The primary structure comprises 413 residues: Protein CDKN2AIP homolog B (413 aa).

Residues 21-118 form the XRN2-binding (XTBD) domain; that stretch reads LERVRGQCES…TTRDELVAKV (98 aa). The segment at 118–266 is disordered; that stretch reads VKKRGNSSSN…PTRRFTTEHT (149 aa). The span at 183-193 shows a compositional bias: basic and acidic residues; sequence NKREAHSRTDV.

The protein belongs to the CARF family.

It is found in the nucleus. Its subcellular location is the nucleoplasm. May regulate DNA damage response and cell proliferation. The sequence is that of Protein CDKN2AIP homolog B (cdkn2aip-b) from Xenopus laevis (African clawed frog).